We begin with the raw amino-acid sequence, 501 residues long: Lycopene beta cyclase, chloroplastic (501 aa).

The N-terminal 48 residues, 1-48, are a transit peptide targeting the chloroplast; that stretch reads MDTLLKTPNKLDFFIPQFHGFERLCSNNPYHSRVRLGVKKRAIKIVSS. Position 49 is an N-acetylvaline (Val-49). 85–113 contacts NAD(+); sequence LAIVGGGPAGLAVAQQVSEAGLSVCSIDP.

It belongs to the lycopene cyclase family.

It localises to the plastid. The protein localises to the chloroplast. It catalyses the reaction a carotenoid psi-end group = a carotenoid beta-end derivative. Its pathway is carotenoid biosynthesis; beta-carotene biosynthesis. It participates in carotenoid biosynthesis; beta-zeacarotene biosynthesis. Involved in carotenoid biosynthesis. Catalyzes the double cyclization reaction which converts lycopene to beta-carotene and neurosporene to beta-zeacarotene. Major lycopene beta-cyclase that does not seem to be involved in neoxanthin synthesis. Involved in salt tolerance improvement by increasing synthesis of carotenoids, which impairs reactive oxygen species (ROS) and protects the photosynthetic system under salt stress. The chain is Lycopene beta cyclase, chloroplastic from Arabidopsis thaliana (Mouse-ear cress).